The primary structure comprises 157 residues: Baculoviral IAP repeat-containing protein 5.2-A (157 aa).

A BIR repeat occupies 31 to 101 (RLRTFSNWPF…KHSPSCLFIA (71 aa)). A Phosphothreonine; by CDK1 modification is found at Thr-47. The Zn(2+) site is built by Cys-70, Cys-73, His-90, and Cys-97.

This sequence belongs to the IAP family. In terms of assembly, component of the CPC at least composed of survivin/birc5, incenp, cdca8/borealin and/or cdca9/dasra-A, and aurkb/aurora-B. Interacts directly with incenp (via N-terminus). Interacts with rxra; the interaction is stronger in the absence of 9-cis retinoic acids. Ubiquitination is required for centrosome-targeting. In terms of tissue distribution, highly expressed in vascular endothelial cells of tadpoles.

It localises to the cytoplasm. Its subcellular location is the nucleus. The protein resides in the chromosome. The protein localises to the centromere. It is found in the cytoskeleton. It localises to the spindle. In terms of biological role, component of the chromosomal passenger complex (CPC), a complex that acts as a key regulator of mitosis. The CPC complex has essential functions at the centromere in ensuring correct chromosome alignment and segregation and is required for chromatin-induced microtubule stabilization and spindle assembly. Does not appear to exhibit anti-apoptotic activity. Plays a role in increasing blood vessel size during development. This is Baculoviral IAP repeat-containing protein 5.2-A (birc5.2-a) from Xenopus laevis (African clawed frog).